The primary structure comprises 349 residues: Dihydroorotase (349 aa).

H17 and H19 together coordinate Zn(2+). Substrate is bound by residues 19–21 (HLR) and N45. Zn(2+)-binding residues include K103, H140, and H178. At K103 the chain carries N6-carboxylysine. H140 lines the substrate pocket. L224 serves as a coordination point for substrate. D252 contacts Zn(2+). Residue D252 is part of the active site. Residues H256 and A268 each contribute to the substrate site.

This sequence belongs to the metallo-dependent hydrolases superfamily. DHOase family. Class II DHOase subfamily. As to quaternary structure, homodimer. Zn(2+) is required as a cofactor.

It catalyses the reaction (S)-dihydroorotate + H2O = N-carbamoyl-L-aspartate + H(+). It functions in the pathway pyrimidine metabolism; UMP biosynthesis via de novo pathway; (S)-dihydroorotate from bicarbonate: step 3/3. Its function is as follows. Catalyzes the reversible cyclization of carbamoyl aspartate to dihydroorotate. In Buchnera aphidicola subsp. Schizaphis graminum (strain Sg), this protein is Dihydroorotase.